Reading from the N-terminus, the 91-residue chain is Ragulator complex protein LAMTOR5 homolog (91 aa).

The protein belongs to the LAMTOR5 family. Part of the Ragulator complex.

It is found in the cytoplasm. The protein localises to the lysosome. Functionally, regulator of the TOR pathway, a signaling cascade that promotes cell growth in response to growth factors, energy levels, and amino acids. As part of the Ragulator complex, may activate the TOR signaling cascade in response to amino acids. This chain is Ragulator complex protein LAMTOR5 homolog, found in Ixodes scapularis (Black-legged tick).